Here is a 403-residue protein sequence, read N- to C-terminus: UPF0229 protein CKR_0568 (403 aa).

The segment at 71–109 (SSGVGSGDGSQKKGDRIGKAIKDRDGKGNQGAGNQEGED) is disordered. Residues 80-97 (SQKKGDRIGKAIKDRDGK) are compositionally biased toward basic and acidic residues.

Belongs to the UPF0229 family.

The sequence is that of UPF0229 protein CKR_0568 from Clostridium kluyveri (strain NBRC 12016).